A 49-amino-acid chain; its full sequence is MKLFILDYEKKRTKIGKGMARRELKMMNKKPDLYTIIVSYFSIFSLFFF.

The helical transmembrane segment at 31 to 48 (PDLYTIIVSYFSIFSLFF) threads the bilayer.

Its subcellular location is the membrane. This is an uncharacterized protein from Saccharomyces cerevisiae (strain ATCC 204508 / S288c) (Baker's yeast).